We begin with the raw amino-acid sequence, 370 residues long: Aspartate-semialdehyde dehydrogenase 1 (370 aa).

NADP(+)-binding positions include 9-12 (RGMV), 36-37 (TS), and glutamine 72. Phosphate is bound at residue arginine 101. Residue cysteine 134 is the Acyl-thioester intermediate of the active site. The residue at position 134 (cysteine 134) is an S-cysteinyl cysteine; in inhibited form. Glutamine 161 lines the substrate pocket. Residues 164–165 (SG) and proline 192 each bind NADP(+). Glutamate 240 contributes to the substrate binding site. Phosphate is bound at residue lysine 243. Residue arginine 267 coordinates substrate. The Proton acceptor role is filled by histidine 274. Glutamine 350 provides a ligand contact to NADP(+).

This sequence belongs to the aspartate-semialdehyde dehydrogenase family. Homodimer.

The catalysed reaction is L-aspartate 4-semialdehyde + phosphate + NADP(+) = 4-phospho-L-aspartate + NADPH + H(+). It functions in the pathway amino-acid biosynthesis; L-lysine biosynthesis via DAP pathway; (S)-tetrahydrodipicolinate from L-aspartate: step 2/4. It participates in amino-acid biosynthesis; L-methionine biosynthesis via de novo pathway; L-homoserine from L-aspartate: step 2/3. Its pathway is amino-acid biosynthesis; L-threonine biosynthesis; L-threonine from L-aspartate: step 2/5. With respect to regulation, inhibited by S-methyl-L-cysteine sulfoxide in vitro, via the formation of a covalently bound cysteine at the active site Cys-134. Functionally, catalyzes the NADPH-dependent formation of L-aspartate-semialdehyde (L-ASA) by the reductive dephosphorylation of L-aspartyl-4-phosphate. The protein is Aspartate-semialdehyde dehydrogenase 1 (asd1) of Vibrio cholerae serotype O1 (strain ATCC 39315 / El Tor Inaba N16961).